The chain runs to 165 residues: UPF0303 protein BTH_I2506 (165 aa).

It belongs to the UPF0303 family.

The polypeptide is UPF0303 protein BTH_I2506 (Burkholderia thailandensis (strain ATCC 700388 / DSM 13276 / CCUG 48851 / CIP 106301 / E264)).